The following is a 179-amino-acid chain: uncharacterized protein (179 aa).

A helical membrane pass occupies residues M5–L25.

It to Rickettsia 17 kDa surface antigen.

It localises to the membrane. This is an uncharacterized protein from Escherichia coli O6:H1 (strain CFT073 / ATCC 700928 / UPEC).